We begin with the raw amino-acid sequence, 57 residues long: Large ribosomal subunit protein bL32 (57 aa).

Basic residues predominate over residues 1–20; the sequence is MAVPKKKTSKAKRDQRRATW. Residues 1 to 24 are disordered; the sequence is MAVPKKKTSKAKRDQRRATWRRQA.

The protein belongs to the bacterial ribosomal protein bL32 family.

The polypeptide is Large ribosomal subunit protein bL32 (Gloeothece citriformis (strain PCC 7424) (Cyanothece sp. (strain PCC 7424))).